The following is a 616-amino-acid chain: Proline--tRNA ligase (616 aa).

It belongs to the class-II aminoacyl-tRNA synthetase family. ProS type 1 subfamily. Homodimer.

The protein localises to the cytoplasm. The catalysed reaction is tRNA(Pro) + L-proline + ATP = L-prolyl-tRNA(Pro) + AMP + diphosphate. Catalyzes the attachment of proline to tRNA(Pro) in a two-step reaction: proline is first activated by ATP to form Pro-AMP and then transferred to the acceptor end of tRNA(Pro). As ProRS can inadvertently accommodate and process non-cognate amino acids such as alanine and cysteine, to avoid such errors it has two additional distinct editing activities against alanine. One activity is designated as 'pretransfer' editing and involves the tRNA(Pro)-independent hydrolysis of activated Ala-AMP. The other activity is designated 'posttransfer' editing and involves deacylation of mischarged Ala-tRNA(Pro). The misacylated Cys-tRNA(Pro) is not edited by ProRS. In Streptococcus gordonii (strain Challis / ATCC 35105 / BCRC 15272 / CH1 / DL1 / V288), this protein is Proline--tRNA ligase.